A 455-amino-acid chain; its full sequence is MMSFSVLQVKRLQLELITPAKPTLQETKFLSDIDDQEGLRFQVPVIMCYKDNPSLNKNCNPVKVIREALSRALVYYYPLAGRLKEGPNRKLMVDCNGEGILFVEASADVTLEQLGDKILPPCPLLEEFLFNFPGSDGIIGCPLLLVQVTCLTCGGFILALRVNHTMCDAPGLLLFLTAIAEMARGAHAPSILPVWERELLFSRDPPRITCVHHEYEDVIDHSDGSYASSNQSNMVQRSFYFGAKEMRVLRKQIPPHVISTCSTFDLITACLSKCRTLALKINPKQAVRVSCVVNARGKHHNVRLPLGYYGNAFACPAAFSKAEPLCKNPLGYALELVKKAKATMNEEYLRSVADLLVLRGRPQYSSTGSYLIVSDNTRAGFGDVNFGWGQPVFAGPAKALDLISFYVQHNNNTEDGILVPMCLPSSAMERFQQELESITPEPKEDICNNLRSTSQ.

Active-site proton acceptor residues include histidine 164 and asparagine 385.

The protein belongs to the plant acyltransferase family. As to expression, expressed at very low levels in the skin of ripe fruit.

Involved in the biosynthesis of volatile esters which confer ripe apple fruit flavor. Alcohol acyl transferase that can use a wide range of alcohols as substrate to produce esters. This chain is Alcohol acyl transferase 1 allele GSb, found in Malus domestica (Apple).